A 448-amino-acid polypeptide reads, in one-letter code: uncharacterized protein (448 aa).

A helical transmembrane segment spans residues 19–41; sequence LGLLVPFLLLLFSCTNTVGYGVL. The region spanning 105–181 is the SH3b domain; sequence YSYATSVLDG…CFSHGLSLFD (77 aa).

The protein localises to the membrane. This is an uncharacterized protein from Treponema pallidum (strain Nichols).